Consider the following 259-residue polypeptide: MILERIVTDNLPDLERRKMRLPLAKLQELVLDIPYLPIDMAMKLKGRQVRLIAEVKKASPSKGIIRPDFDPVDIAGIYARNGASAISVLTEEHHFMGSLDNLKKIRESGVASKLPLLRKDFIHDPYQVYESRLYGADAILLIVAMLSPERLQELLSLSHKLGMKCLVEVHTRSELEIALESNARIIGLNNRDLHTFKIDLTVTERLRPLIPPECIVVSESGIQTRADISRLEELGVDAVLVGEALTASVDIAAKMRELL.

This sequence belongs to the TrpC family.

It catalyses the reaction 1-(2-carboxyphenylamino)-1-deoxy-D-ribulose 5-phosphate + H(+) = (1S,2R)-1-C-(indol-3-yl)glycerol 3-phosphate + CO2 + H2O. Its pathway is amino-acid biosynthesis; L-tryptophan biosynthesis; L-tryptophan from chorismate: step 4/5. This Dehalococcoides mccartyi (strain ATCC BAA-2266 / KCTC 15142 / 195) (Dehalococcoides ethenogenes (strain 195)) protein is Indole-3-glycerol phosphate synthase.